The sequence spans 647 residues: DNA mismatch repair protein MutL (647 aa).

Belongs to the DNA mismatch repair MutL/HexB family.

This protein is involved in the repair of mismatches in DNA. It is required for dam-dependent methyl-directed DNA mismatch repair. May act as a 'molecular matchmaker', a protein that promotes the formation of a stable complex between two or more DNA-binding proteins in an ATP-dependent manner without itself being part of a final effector complex. This chain is DNA mismatch repair protein MutL, found in Koribacter versatilis (strain Ellin345).